A 60-amino-acid chain; its full sequence is Hemocyte defensin Cg-Defh2 (60 aa).

A signal peptide spans 1–17 (LLTLAVLLMVSADMAFA). Positions 19, 20, and 21 each coordinate beta-D-GlcNAc-(1-&gt;4)-Mur2Ac(oyl-L-Ala-gamma-D-Glu-L-Lys-D-Ala-D-Ala)-di-trans,octa-cis-undecaprenyl diphosphate. Disulfide bonds link Cys-21/Cys-42, Cys-28/Cys-51, Cys-32/Cys-53, and Cys-37/Cys-56. The tract at residues 22–25 (PGDQ) is binds to membrane interface. His-31 contributes to the beta-D-GlcNAc-(1-&gt;4)-Mur2Ac(oyl-L-Ala-gamma-D-Glu-L-Lys-D-Ala-D-Ala)-di-trans,octa-cis-undecaprenyl diphosphate binding site. Residues 43 to 49 (DAVTLWL) form a binds to membrane interface region. Cys-51 serves as a coordination point for beta-D-GlcNAc-(1-&gt;4)-Mur2Ac(oyl-L-Ala-gamma-D-Glu-L-Lys-D-Ala-D-Ala)-di-trans,octa-cis-undecaprenyl diphosphate.

This sequence belongs to the invertebrate defensin family. As to expression, expressed in hemocytes.

The protein resides in the secreted. It localises to the target cell membrane. In terms of biological role, antibacterial peptide mostly active against Gram-positive bacteria. It acts by selectively inhibiting peptidoglycan biosynthesis through complex formation with the cell wall precursor lipid II (1:1 molar ratio) thus inhibiting cell wall synthesis. It does not disrupt cell membranes. Is noticeably more potent than Cg-Defh1. The polypeptide is Hemocyte defensin Cg-Defh2 (Magallana gigas (Pacific oyster)).